We begin with the raw amino-acid sequence, 188 residues long: Threonylcarbamoyl-AMP synthase (188 aa).

A YrdC-like domain is found at 3–188 (QLHPSEIKDI…RSGKILRNGQ (186 aa)).

It belongs to the SUA5 family. TsaC subfamily.

The protein localises to the cytoplasm. The enzyme catalyses L-threonine + hydrogencarbonate + ATP = L-threonylcarbamoyladenylate + diphosphate + H2O. Functionally, required for the formation of a threonylcarbamoyl group on adenosine at position 37 (t(6)A37) in tRNAs that read codons beginning with adenine. Catalyzes the conversion of L-threonine, HCO(3)(-)/CO(2) and ATP to give threonylcarbamoyl-AMP (TC-AMP) as the acyladenylate intermediate, with the release of diphosphate. The chain is Threonylcarbamoyl-AMP synthase from Shewanella sp. (strain MR-4).